Here is a 319-residue protein sequence, read N- to C-terminus: 4-hydroxy-3-methylbut-2-enyl diphosphate reductase (319 aa).

Residue cysteine 12 coordinates [4Fe-4S] cluster. Histidine 41 and histidine 74 together coordinate (2E)-4-hydroxy-3-methylbut-2-enyl diphosphate. The dimethylallyl diphosphate site is built by histidine 41 and histidine 74. Residues histidine 41 and histidine 74 each contribute to the isopentenyl diphosphate site. Residue cysteine 96 participates in [4Fe-4S] cluster binding. Histidine 124 provides a ligand contact to (2E)-4-hydroxy-3-methylbut-2-enyl diphosphate. Histidine 124 serves as a coordination point for dimethylallyl diphosphate. Histidine 124 lines the isopentenyl diphosphate pocket. The active-site Proton donor is the glutamate 126. (2E)-4-hydroxy-3-methylbut-2-enyl diphosphate is bound at residue threonine 167. Cysteine 197 provides a ligand contact to [4Fe-4S] cluster. (2E)-4-hydroxy-3-methylbut-2-enyl diphosphate contacts are provided by serine 225, serine 226, asparagine 227, and serine 269. Residues serine 225, serine 226, asparagine 227, and serine 269 each contribute to the dimethylallyl diphosphate site. Residues serine 225, serine 226, asparagine 227, and serine 269 each coordinate isopentenyl diphosphate.

This sequence belongs to the IspH family. In terms of assembly, homodimer. [4Fe-4S] cluster serves as cofactor.

The enzyme catalyses isopentenyl diphosphate + 2 oxidized [2Fe-2S]-[ferredoxin] + H2O = (2E)-4-hydroxy-3-methylbut-2-enyl diphosphate + 2 reduced [2Fe-2S]-[ferredoxin] + 2 H(+). It carries out the reaction dimethylallyl diphosphate + 2 oxidized [2Fe-2S]-[ferredoxin] + H2O = (2E)-4-hydroxy-3-methylbut-2-enyl diphosphate + 2 reduced [2Fe-2S]-[ferredoxin] + 2 H(+). The protein operates within isoprenoid biosynthesis; dimethylallyl diphosphate biosynthesis; dimethylallyl diphosphate from (2E)-4-hydroxy-3-methylbutenyl diphosphate: step 1/1. It functions in the pathway isoprenoid biosynthesis; isopentenyl diphosphate biosynthesis via DXP pathway; isopentenyl diphosphate from 1-deoxy-D-xylulose 5-phosphate: step 6/6. In terms of biological role, catalyzes the conversion of 1-hydroxy-2-methyl-2-(E)-butenyl 4-diphosphate (HMBPP) into a mixture of isopentenyl diphosphate (IPP) and dimethylallyl diphosphate (DMAPP). Acts in the terminal step of the DOXP/MEP pathway for isoprenoid precursor biosynthesis. The chain is 4-hydroxy-3-methylbut-2-enyl diphosphate reductase from Buchnera aphidicola subsp. Acyrthosiphon pisum (strain Tuc7).